Consider the following 475-residue polypeptide: ATP synthase subunit beta (475 aa).

Residue 161 to 168 (GGAGVGKT) participates in ATP binding.

The protein belongs to the ATPase alpha/beta chains family. In terms of assembly, F-type ATPases have 2 components, CF(1) - the catalytic core - and CF(0) - the membrane proton channel. CF(1) has five subunits: alpha(3), beta(3), gamma(1), delta(1), epsilon(1). CF(0) has three main subunits: a(1), b(2) and c(9-12). The alpha and beta chains form an alternating ring which encloses part of the gamma chain. CF(1) is attached to CF(0) by a central stalk formed by the gamma and epsilon chains, while a peripheral stalk is formed by the delta and b chains.

Its subcellular location is the cell membrane. The catalysed reaction is ATP + H2O + 4 H(+)(in) = ADP + phosphate + 5 H(+)(out). Its function is as follows. Produces ATP from ADP in the presence of a proton gradient across the membrane. The catalytic sites are hosted primarily by the beta subunits. The protein is ATP synthase subunit beta of Mycoplasma mycoides subsp. mycoides SC (strain CCUG 32753 / NCTC 10114 / PG1).